The chain runs to 498 residues: WD repeat-containing protein 55 homolog (498 aa).

The tract at residues 1–131 (MHTHNNFKTP…ATFDLDEDDE (131 aa)) is disordered. Composition is skewed to acidic residues over residues 12–23 (DEDELDDLDEDM) and 31–48 (IEQE…EYDL). 6 WD repeats span residues 154–193 (KLED…NKLL), 198–237 (VHSK…LKKL), 241–279 (AHDD…AIFE), 282–321 (ELED…MYVQ), 324–363 (PYEE…YHCD), and 408–447 (QHNM…DFGE).

The protein belongs to the WD repeat WDR55 family.

The protein is WD repeat-containing protein 55 homolog of Drosophila simulans (Fruit fly).